A 93-amino-acid polypeptide reads, in one-letter code: uncharacterized protein (93 aa).

The next 3 membrane-spanning stretches (helical) occupy residues 15–35 (MAGLRVLSSMIELTAAIVMLV), 48–68 (ILAIVGPLIFIITMTVGIYQI), and 72–92 (LSYAKLILIFTGVVLILAGVH).

The protein localises to the cell membrane. This is an uncharacterized protein from Bacillus subtilis (strain 168).